Here is a 1634-residue protein sequence, read N- to C-terminus: DNA polymerase (1634 aa).

2 consecutive DOD-type homing endonuclease domains span residues 552 to 693 and 1163 to 1295; these read LIGI…RLGI and FLGF…LVGI.

This sequence belongs to the DNA polymerase type-B family. In terms of processing, this protein undergoes a protein self splicing that involves a post-translational excision of the intervening region (intein) followed by peptide ligation.

The enzyme catalyses DNA(n) + a 2'-deoxyribonucleoside 5'-triphosphate = DNA(n+1) + diphosphate. This chain is DNA polymerase (pol), found in Methanocaldococcus jannaschii (strain ATCC 43067 / DSM 2661 / JAL-1 / JCM 10045 / NBRC 100440) (Methanococcus jannaschii).